A 220-amino-acid polypeptide reads, in one-letter code: Probable GTP-binding protein EngB (220 aa).

One can recognise an EngB-type G domain in the interval 23–199; sequence SVREVAFAGR…ERVLASWLDI (177 aa). Mg(2+) is bound by residues Ser38 and Thr60.

It belongs to the TRAFAC class TrmE-Era-EngA-EngB-Septin-like GTPase superfamily. EngB GTPase family. Mg(2+) is required as a cofactor.

Its function is as follows. Necessary for normal cell division and for the maintenance of normal septation. This is Probable GTP-binding protein EngB from Dechloromonas aromatica (strain RCB).